A 406-amino-acid chain; its full sequence is NIPA-like protein 3 (406 aa).

The next 4 membrane-spanning stretches (helical) occupy residues 33–53 (NLIG…ALNL), 76–96 (WWLG…SYAF), 101–121 (LIVP…IIFI), and 135–155 (ILSF…VTFA). N166 carries an N-linked (GlcNAc...) asparagine glycan. 5 helical membrane-spanning segments follow: residues 171 to 191 (LVSW…CLLL), 202 to 222 (IVVI…TVKA), 240 to 260 (PIFY…AAFL), 271 to 291 (LIAS…GAIF), and 300 to 320 (VLHI…VFLI). Position 372 is a phosphoserine (S372).

This sequence belongs to the NIPA family.

The protein resides in the membrane. The protein is NIPA-like protein 3 (NIPAL3) of Pongo abelii (Sumatran orangutan).